Reading from the N-terminus, the 172-residue chain is SsrA-binding protein (172 aa).

It belongs to the SmpB family.

The protein localises to the cytoplasm. Its function is as follows. Required for rescue of stalled ribosomes mediated by trans-translation. Binds to transfer-messenger RNA (tmRNA), required for stable association of tmRNA with ribosomes. tmRNA and SmpB together mimic tRNA shape, replacing the anticodon stem-loop with SmpB. tmRNA is encoded by the ssrA gene; the 2 termini fold to resemble tRNA(Ala) and it encodes a 'tag peptide', a short internal open reading frame. During trans-translation Ala-aminoacylated tmRNA acts like a tRNA, entering the A-site of stalled ribosomes, displacing the stalled mRNA. The ribosome then switches to translate the ORF on the tmRNA; the nascent peptide is terminated with the 'tag peptide' encoded by the tmRNA and targeted for degradation. The ribosome is freed to recommence translation, which seems to be the essential function of trans-translation. The protein is SsrA-binding protein of Dehalococcoides mccartyi (strain ATCC BAA-2100 / JCM 16839 / KCTC 5957 / BAV1).